The following is a 508-amino-acid chain: Kinesin light chain (508 aa).

A coiled-coil region spans residues 34–129 (IAEVQKDNEK…KKHLEFMASV (96 aa)). Residues 156–175 (DEENEDRHNMSPTPPSQFAN) are disordered. The residue at position 168 (Thr168) is a Phosphothreonine. TPR repeat units follow at residues 186-219 (LRTL…LERT), 228-261 (ATML…RGKT), 270-303 (AATL…REKV), 312-345 (AKQL…YESK), 354-387 (AKTK…AHER), and 437-470 (TTTL…KKEA). Position 477 is a phosphothreonine (Thr477). Phosphoserine is present on residues Ser480 and Ser485. The tract at residues 484–508 (TSNEKRRSKAIKEDLDFSEEKNAKP) is disordered. Residues 493–508 (AIKEDLDFSEEKNAKP) show a composition bias toward basic and acidic residues.

The protein belongs to the kinesin light chain family. In terms of assembly, oligomeric complex composed of two heavy chains and two light chains. In terms of tissue distribution, ubiquitous.

The protein resides in the cytoplasm. It is found in the cytoskeleton. Kinesin is a microtubule-associated force-producing protein that may play a role in organelle transport. The light chain may function in coupling of cargo to the heavy chain or in the modulation of its ATPase activity. This chain is Kinesin light chain (Klc), found in Drosophila melanogaster (Fruit fly).